Here is a 685-residue protein sequence, read N- to C-terminus: Tyrosinase (685 aa).

Ser-2 carries the post-translational modification N-acetylserine. Residues His-67, His-97, His-106, His-278, His-282, and His-307 each coordinate Cu cation. The segment at residues 95 to 97 is a cross-link (2'-(S-cysteinyl)-histidine (Cys-His)); that stretch reads CTH. Residues 409–685 constitute a propeptide, could be involved in enzyme activation; it reads ANFVENVADR…PCGHGPEDHI (277 aa).

It belongs to the tyrosinase family. The cofactor is Cu(2+).

It carries out the reaction 2 L-dopa + O2 = 2 L-dopaquinone + 2 H2O. The enzyme catalyses L-tyrosine + O2 = L-dopaquinone + H2O. Functionally, this is a copper-containing oxidase that functions in the formation of pigments such as melanins and other polyphenolic compounds. This is Tyrosinase (T) from Neurospora crassa (strain ATCC 24698 / 74-OR23-1A / CBS 708.71 / DSM 1257 / FGSC 987).